Reading from the N-terminus, the 247-residue chain is 3-deoxy-manno-octulosonate cytidylyltransferase (247 aa).

It belongs to the KdsB family.

The protein localises to the cytoplasm. It catalyses the reaction 3-deoxy-alpha-D-manno-oct-2-ulosonate + CTP = CMP-3-deoxy-beta-D-manno-octulosonate + diphosphate. It functions in the pathway nucleotide-sugar biosynthesis; CMP-3-deoxy-D-manno-octulosonate biosynthesis; CMP-3-deoxy-D-manno-octulosonate from 3-deoxy-D-manno-octulosonate and CTP: step 1/1. The protein operates within bacterial outer membrane biogenesis; lipopolysaccharide biosynthesis. Activates KDO (a required 8-carbon sugar) for incorporation into bacterial lipopolysaccharide in Gram-negative bacteria. In Rhodopseudomonas palustris (strain BisA53), this protein is 3-deoxy-manno-octulosonate cytidylyltransferase.